Consider the following 200-residue polypeptide: NADH-quinone oxidoreductase subunit C (200 aa).

It belongs to the complex I 30 kDa subunit family. In terms of assembly, NDH-1 is composed of 14 different subunits. Subunits NuoB, C, D, E, F, and G constitute the peripheral sector of the complex.

The protein resides in the cell inner membrane. It carries out the reaction a quinone + NADH + 5 H(+)(in) = a quinol + NAD(+) + 4 H(+)(out). In terms of biological role, NDH-1 shuttles electrons from NADH, via FMN and iron-sulfur (Fe-S) centers, to quinones in the respiratory chain. The immediate electron acceptor for the enzyme in this species is believed to be ubiquinone. Couples the redox reaction to proton translocation (for every two electrons transferred, four hydrogen ions are translocated across the cytoplasmic membrane), and thus conserves the redox energy in a proton gradient. In Thiobacillus denitrificans (strain ATCC 25259 / T1), this protein is NADH-quinone oxidoreductase subunit C.